The primary structure comprises 242 residues: Biosynthetic peptidoglycan transglycosylase (242 aa).

A helical transmembrane segment spans residues 18-38 (VIMAVLCIAILYQLWMFSLVV).

This sequence belongs to the glycosyltransferase 51 family.

It localises to the cell inner membrane. The catalysed reaction is [GlcNAc-(1-&gt;4)-Mur2Ac(oyl-L-Ala-gamma-D-Glu-L-Lys-D-Ala-D-Ala)](n)-di-trans,octa-cis-undecaprenyl diphosphate + beta-D-GlcNAc-(1-&gt;4)-Mur2Ac(oyl-L-Ala-gamma-D-Glu-L-Lys-D-Ala-D-Ala)-di-trans,octa-cis-undecaprenyl diphosphate = [GlcNAc-(1-&gt;4)-Mur2Ac(oyl-L-Ala-gamma-D-Glu-L-Lys-D-Ala-D-Ala)](n+1)-di-trans,octa-cis-undecaprenyl diphosphate + di-trans,octa-cis-undecaprenyl diphosphate + H(+). Its pathway is cell wall biogenesis; peptidoglycan biosynthesis. Functionally, peptidoglycan polymerase that catalyzes glycan chain elongation from lipid-linked precursors. The polypeptide is Biosynthetic peptidoglycan transglycosylase (Bordetella bronchiseptica (strain ATCC BAA-588 / NCTC 13252 / RB50) (Alcaligenes bronchisepticus)).